Consider the following 305-residue polypeptide: Putative E3 ubiquitin-protein ligase SINAT1 (305 aa).

Residues 57-93 form an RING-type zinc finger; it reads CPVCTNLMYPPIHQCPNGHTLCSSCKLRVQNTCPTCR. Residues 107–300 form an SBD region; the sequence is VAESLEVPCR…EELKLRVTGR (194 aa). An SIAH-type zinc finger spans residues 110-170; that stretch reads SLEVPCRYQN…LVDHLKDDHK (61 aa). Zn(2+)-binding residues include Cys115, Cys122, His134, Cys138, Cys145, Cys152, His164, and His169.

It belongs to the SINA (Seven in absentia) family. Interacts with SINAT6. Interacts with ATG6 and TRAF1A. Interacts with WAV3. Interacts with FREE1. Interacts with ELC/VPS23A.

The protein resides in the endosome. It localises to the multivesicular body. It is found in the cytoplasmic vesicle. Its subcellular location is the autophagosome. It carries out the reaction S-ubiquitinyl-[E2 ubiquitin-conjugating enzyme]-L-cysteine + [acceptor protein]-L-lysine = [E2 ubiquitin-conjugating enzyme]-L-cysteine + N(6)-ubiquitinyl-[acceptor protein]-L-lysine.. It functions in the pathway protein modification; protein ubiquitination. In terms of biological role, E3 ubiquitin-protein ligase that mediates ubiquitination and subsequent proteasomal degradation of target proteins. E3 ubiquitin ligases accept ubiquitin from an E2 ubiquitin-conjugating enzyme in the form of a thioester and then directly transfers the ubiquitin to targeted substrates. It probably triggers the ubiquitin-mediated degradation of different substrates. Mediates the proteasomal-dependent degradation of ATG6, a component of the autophagosome complex. Requires TRAF1A/MUSE14 and TRAF1B/MUSE13 to target ATG6 for ubiquitination and subsequent regulation of autophagosome assembly. Modulates directly the ubiquitination and proteasomal-dependent degradation of FREE1, a component of the ESCRT-I complex. Modulates directly the ubiquitination and proteasomal-dependent degradation of ELC/VPS23A, a component of the ESCRT-I complex. In Arabidopsis thaliana (Mouse-ear cress), this protein is Putative E3 ubiquitin-protein ligase SINAT1.